We begin with the raw amino-acid sequence, 327 residues long: Malate dehydrogenase (327 aa).

An NAD(+)-binding site is contributed by 11–17; sequence GAAGQIA. Substrate is bound by residues arginine 92 and arginine 98. NAD(+) contacts are provided by residues asparagine 105, glutamine 112, and 128 to 130; that span reads VGN. Substrate is bound by residues asparagine 130 and arginine 160. The Proton acceptor role is filled by histidine 185.

Belongs to the LDH/MDH superfamily. MDH type 2 family.

It catalyses the reaction (S)-malate + NAD(+) = oxaloacetate + NADH + H(+). Its function is as follows. Catalyzes the reversible oxidation of malate to oxaloacetate. This Magnetococcus marinus (strain ATCC BAA-1437 / JCM 17883 / MC-1) protein is Malate dehydrogenase.